Here is a 308-residue protein sequence, read N- to C-terminus: F-actin-capping protein subunit alpha (308 aa).

Belongs to the F-actin-capping protein alpha subunit family. As to quaternary structure, component of the F-actin capping complex, composed of a heterodimer of an alpha and a beta subunit.

F-actin-capping proteins bind in a Ca(2+)-independent manner to the fast growing ends of actin filaments (barbed end) thereby blocking the exchange of subunits at these ends. Unlike other capping proteins (such as gelsolin and severin), these proteins do not sever actin filaments. This chain is F-actin-capping protein subunit alpha, found in Arabidopsis thaliana (Mouse-ear cress).